Consider the following 388-residue polypeptide: Protein SopA (388 aa).

This sequence belongs to the ParA family.

Its function is as follows. This protein is essential for plasmid partition. It ensures the proper distribution of newly replicated plasmids to daughter cells during cell division. SopA is trans-acting. The chain is Protein SopA (sopA) from Escherichia coli O157:H7.